A 235-amino-acid chain; its full sequence is Purine nucleoside phosphorylase DeoD-type (235 aa).

Histidine 4 contributes to the a purine D-ribonucleoside binding site. Phosphate contacts are provided by residues glycine 20, arginine 24, arginine 43, and 87 to 90; that span reads RVGT. A purine D-ribonucleoside contacts are provided by residues 179-181 and 203-204; these read EME and SD. Residue aspartate 204 is the Proton donor of the active site.

Belongs to the PNP/UDP phosphorylase family. As to quaternary structure, homohexamer; trimer of homodimers.

It catalyses the reaction a purine D-ribonucleoside + phosphate = a purine nucleobase + alpha-D-ribose 1-phosphate. It carries out the reaction a purine 2'-deoxy-D-ribonucleoside + phosphate = a purine nucleobase + 2-deoxy-alpha-D-ribose 1-phosphate. Catalyzes the reversible phosphorolytic breakdown of the N-glycosidic bond in the beta-(deoxy)ribonucleoside molecules, with the formation of the corresponding free purine bases and pentose-1-phosphate. This is Purine nucleoside phosphorylase DeoD-type from Clostridium perfringens (strain ATCC 13124 / DSM 756 / JCM 1290 / NCIMB 6125 / NCTC 8237 / Type A).